A 66-amino-acid polypeptide reads, in one-letter code: Sec-independent protein translocase protein TatA (66 aa).

Residues 1 to 21 (MSIGIWQIAIVVILVVLLFGR) traverse the membrane as a helical segment. The tract at residues 43–66 (ATDITDEPEPKNVSENNQDSKDKE) is disordered. Positions 50–66 (PEPKNVSENNQDSKDKE) are enriched in basic and acidic residues.

The protein belongs to the TatA/E family. In terms of assembly, the Tat system comprises two distinct complexes: a TatABC complex, containing multiple copies of TatA, TatB and TatC subunits, and a separate TatA complex, containing only TatA subunits. Substrates initially bind to the TatABC complex, which probably triggers association of the separate TatA complex to form the active translocon.

The protein localises to the cell inner membrane. Part of the twin-arginine translocation (Tat) system that transports large folded proteins containing a characteristic twin-arginine motif in their signal peptide across membranes. TatA could form the protein-conducting channel of the Tat system. The protein is Sec-independent protein translocase protein TatA of Pelagibacter ubique (strain HTCC1062).